Here is a 562-residue protein sequence, read N- to C-terminus: Non-homologous end joining factor IFFO1 (562 aa).

The LMNA binding stretch occupies residues 65-116 (ALRNDLGSNINVLKTLNLRFRCFLAKVHELERRNRLLEKQLQQALEEGKQGR). In terms of domain architecture, IF rod spans 73–529 (NINVLKTLNL…RLITQSGDRK (457 aa)). Residues 85 to 117 (RCFLAKVHELERRNRLLEKQLQQALEEGKQGRR) are a coiled coil. Residues 154 to 187 (RVLGSPSRSPAGPLASSAACHTSSSTSTSTAFSS) form a disordered region. Residues 168-187 (ASSAACHTSSSTSTSTAFSS) are compositionally biased toward low complexity. Residues 237-301 (EIRALYNVLA…MKVEQLKAEL (65 aa)) adopt a coiled-coil conformation. The segment at 364 to 401 (MGGRKRERKAAVEEDTSLSESDGPRQPEGAEEESTALS) is disordered. Residues 453 to 528 (EQEDSLEKVI…RRLITQSGDR (76 aa)) are XCCR4 binding. Required for localization to the double-strand breaks (DSBs). The stretch at 458–504 (LEKVIKDTESLFKTREKEYQETIDQIELELATAKNDMNRHLHEYMEM) forms a coiled coil. The tract at residues 523-562 (TQSGDRKSPAFTAVPLSDPPPPPSETEDSDRDVSSDSSMR) is disordered. Residues 553–562 (RDVSSDSSMR) are compositionally biased toward basic and acidic residues.

The protein belongs to the intermediate filament family. As to quaternary structure, forms a heterotetramer with XRCC4. The interaction with XRCC4 is direct, involves LIG4-free XRCC4 and leads to relocalization of IFFO1 at the double-strand break (DSB) sites. Interacts with LMNA; the interaction forms an interior nucleoskeleton and the recruitment to DNA double-strand breaks.

It localises to the nucleus. The protein resides in the nucleoplasm. Its subcellular location is the nucleus inner membrane. It is found in the nucleus matrix. Its function is as follows. Nuclear matrix protein involved in the immobilization of broken DNA ends and the suppression of chromosome translocation during DNA double-strand breaks (DSBs). Interacts with the nuclear lamina component LMNA, resulting in the formation of a nucleoskeleton that will relocalize to the DSB sites in a XRCC4-dependent manner and promote the immobilization of the broken ends, thereby preventing chromosome translocation. Acts as a scaffold that allows the DNA repair protein XRCC4 and LMNA to assemble into a complex at the DSB sites. This Mus musculus (Mouse) protein is Non-homologous end joining factor IFFO1.